Here is a 256-residue protein sequence, read N- to C-terminus: Thiazole synthase (256 aa).

The active-site Schiff-base intermediate with DXP is K96. 1-deoxy-D-xylulose 5-phosphate contacts are provided by residues G157, 184–185 (AG), and 206–207 (NT).

This sequence belongs to the ThiG family. Homotetramer. Forms heterodimers with either ThiH or ThiS.

It is found in the cytoplasm. It carries out the reaction [ThiS sulfur-carrier protein]-C-terminal-Gly-aminoethanethioate + 2-iminoacetate + 1-deoxy-D-xylulose 5-phosphate = [ThiS sulfur-carrier protein]-C-terminal Gly-Gly + 2-[(2R,5Z)-2-carboxy-4-methylthiazol-5(2H)-ylidene]ethyl phosphate + 2 H2O + H(+). The protein operates within cofactor biosynthesis; thiamine diphosphate biosynthesis. In terms of biological role, catalyzes the rearrangement of 1-deoxy-D-xylulose 5-phosphate (DXP) to produce the thiazole phosphate moiety of thiamine. Sulfur is provided by the thiocarboxylate moiety of the carrier protein ThiS. In vitro, sulfur can be provided by H(2)S. The protein is Thiazole synthase of Brucella suis (strain ATCC 23445 / NCTC 10510).